Here is a 61-residue protein sequence, read N- to C-terminus: Bactericidin B-5P (61 aa).

The first 22 residues, 1 to 22, serve as a signal peptide directing secretion; sequence MNFSRVLFFVFACLSAFAMASA. Residues 23–24 constitute a propeptide, removed by a dipeptidylpeptidase; that stretch reads AP. G60 is subject to Glycine amide.

It belongs to the cecropin family.

The protein resides in the secreted. Its function is as follows. Cecropins have lytic and antibacterial activity against several Gram-positive and Gram-negative bacteria. This Manduca sexta (Tobacco hawkmoth) protein is Bactericidin B-5P.